Consider the following 81-residue polypeptide: Acyl carrier protein (81 aa).

The 79-residue stretch at Ala-2–Gln-80 folds into the Carrier domain. Ser-40 is subject to O-(pantetheine 4'-phosphoryl)serine.

It belongs to the acyl carrier protein (ACP) family. 4'-phosphopantetheine is transferred from CoA to a specific serine of apo-ACP by AcpS. This modification is essential for activity because fatty acids are bound in thioester linkage to the sulfhydryl of the prosthetic group.

It is found in the cytoplasm. Its pathway is lipid metabolism; fatty acid biosynthesis. Its function is as follows. Carrier of the growing fatty acid chain in fatty acid biosynthesis. This chain is Acyl carrier protein, found in Kineococcus radiotolerans (strain ATCC BAA-149 / DSM 14245 / SRS30216).